The primary structure comprises 2716 residues: MNEKIKSPQTQQQQQGGAPAPAATPPSAGAAPGAATPPTSGPPTPNNNSNNGSDPSIQQQQQNVAPHPYGAPPPPGSGPGGPPGPDPAAVMHYHHLHQQQQQHPPPPHMQQQQHHGGPAPPPPGGAPEHAPGVKEEYTHLPPPHPHPAYGRYHADPNMDPYRYGQPLPGGKPPQQQQPHPQQQPPQQPGPGGSPNRPPQQRYIPGQPPQGPTPTLNSLLQSSNPPPPPQHRYANTYDPQQAAASAAAAAAAQQQQAGGPPPPGHGPPPPQHQPSPYGGQQGGWAPPPRPYSPQLGPSQQYRTPPPTNTSRGQSPYPPAHGQNSGSYPSSPQQQQQQQQQQQQQAGQQPGGPVPGGPPPGTGQQPPQQNTPPTSQYSPYPQRYPTPPGLPAGGSNHRTAYSTHQYPEPNRPWPGGSSPSPGSGHPLPPASPHHVPPLQQQPPPPPHVSAGGPPPSSSPGHAPSPSPQPSQASPSPHQELIGQNSNDSSSGGAHSGMGSGPPGTPNPQQVMRPTPSPTGSSGSRSMSPAVAQNHPISRPASNQSSSGGPMQQPPVGAGGPPPMPPHPGMPGGPPQQQQSQQQQASNSASSASNSPQQTPPPAPPPNQGMNNMATPPPPPQGAAGGGYPMPPHMHGGYKMGGPGQSPGAQGYPPQQPQQYPPGNYPPRPQYPPGAYATGPPPPPTSQAGAGGANSMPSGAQAGGYPGRGMPNHTGQYPPYQWVPPSPQQTVPGGAPGGAMVGNHVQGKGTPPPPVVGGPPPPQGSGSPRPLNYLKQHLQHKGGYGGSPTPPQGPQGYGNGPTGMHPGMPMGPPHHMGPPHGPTNMGPPTSTPPQSQMLQGGQPQGQGASGGPESGGPEHISQDNGISSSGPTGAAGMHAVTSVVTTGPDGTSMDEVSQQSTLSNASAASGEDPQCTTPKSRKNDPYSQSHLAPPSTSPHPVVMHPGGGPGEEYDMSSPPNWPRPAGSPQVFNHVPVPQEPFRSTITTTKKSDSLCKLYEMDDNPDRRGWLDKLRAFMEERRTPITACPTISKQPLDLYRLYIYVKERGGFVEVTKSKTWKDIAGLLGIGASSSAAYTLRKHYTKNLLTFECHFDRGDIDPLPIIQQVEAGSKKKTAKAASVPSPGGGHLDAGTTNSTGSSNSQDSFPAPPGSAPNAAIDGYPGYPGGSPYPVASGPQPDYATAGQMQRPPSQNNPQTPHPGAAAAVAAGDNISVSNPFEDPIAAGGGPGSGTGPGPGQGPGPGAASGGAGAVGAVGGGPQPHPPPPHSPHTAAQQAAGQHQQQHPQHQHPGLPGPPPPQQQQGQQGQQPPPSVGGGPPPAPQQHGPGQVPPSPQQHVRPAAGAPYPPGGSGYPTPVSRTPGSPYPSQPGAYGQYGSSDQYNATGPPGQPFGQGPGQYPPQNRNMYPPYGPEGEAPPTGANQYGPYGSRPYSQPPPGGPQPPTQTVAGGPPAGGAPGAPPSSAYPTGRPSQQDYYQPPPDQSPQPRRHPDFIKDSQPYPGYNARPQIYGAWQSGTQQYRPQYPSSPAPQNWGGAPPRGAAPPPGAPHGPPIQQPAGVAQWDQHRYPPQQGPPPPPQQQQQPQQQQQQPPYQQVAGPPGQQPPQAPPQWAQMNPGQTAQSGIAPPGSPLRPPSGPGQQNRMPGMPAQQQQSQQQGGVPQPPPQQASHGGVPSPGLPQVGPGGMVKPPYAMPPPPSQGVGQQVGQGPPGGMMSQKPPPMPGQAMQQQPLQQQPPSHQHPHPHQHPQHQHPHQMPPNQTAPGGYGPPGMPGGGAQLVKKELIFPHDSVESTTPVLYRRKRLMKADVCPVDPWRIFMAMRSGLLTECTWALDVLNVLLFDDSTVQFFGISNLPGLLTLLLEHFQKNLAEMFDERENEEQSALLAEDADDDADSGTVMCEKLRTSGRQPRCVRSISSYNRRRHYENMDRSGKDGAGNGSDSEDADEGIDLGQVRVQPNPEERSLLLSFTPNYTMVTRKGVPVRIQPAENDIFVDERQKAWDIDTNRLYEQLEPVGSDAWTYGFTEPDPLDGIIDVFKSEIVNIPFARYIRSDKKGRKRTELASSSRKPEIKTEENSTEEQTFNKKRRLVSGGSSSSGAHAEGKKSKLTSEEFAQPNAEVKKEPGTADSDCRPVDMDIEAPQQRLTNGVAPCSSTPAIFDPRTTAKDEARVLQRRRDSSFEDECYTRDEASLHLVSESQDSLARRCIALSNIFRNLTFVPGNETVLAKSTRFLAVLGRLLLLNHEHLRRTPKTRNYDREEDTDFSDSCSSLQGEREWWWDYLITIRENMLVAMANIAGHLELSRYDELIARPLIDGLLHWAVCPSAHGQDPFPSCGPNSVLSPQRLALEALCKLCVTDANVDLVIATPPFSRLEKLCAVLTRHLCRNEDQVLREFSVNLLHYLAAADSAMARTVALQSPCISYLVAFIEQAEQTALGVANQHGINYLRENPDSMGTSLDMLRRAAGTLLHLAKHPDNRSLFMQQEQRLLGLVMSHILDQQVALIISRVLYQVSRGTGPIHSVEFRLLQQRQQQQLRPGPAGKQAASAGGSATVKAETASTETSSTEAKPAPAATTAVVNDENSNSSQQLPPAATFNDVSNSSTNSNSCGTASSNQTNNSTTNSSHSSSAISSQSAITVAAPSAAATGAGSATAAAIASDQQQVSKVAAAAAAAAALSNASAAAAAAAAAAAASVGPPTSSSVSAGAAVAQPAAPPPTNAGTTTAVA.

The disordered stretch occupies residues 1–969; the sequence is MNEKIKSPQT…RPAGSPQVFN (969 aa). Over residues 7-38 the composition is skewed to low complexity; it reads SPQTQQQQQGGAPAPAATPPSAGAAPGAATPP. Over residues 54-64 the composition is skewed to polar residues; that stretch reads DPSIQQQQQNV. Positions 69 to 86 are enriched in pro residues; it reads YGAPPPPGSGPGGPPGPD. Composition is skewed to low complexity over residues 164–180, 212–222, and 238–257; these read GQPL…QPHP, TPTLNSLLQSS, and PQQA…QQAG. Residues 258-272 show a composition bias toward pro residues; sequence GPPPPGHGPPPPQHQ. Over residues 294 to 312 the composition is skewed to polar residues; it reads LGPSQQYRTPPPTNTSRGQ. Positions 320–346 are enriched in low complexity; the sequence is GQNSGSYPSSPQQQQQQQQQQQQQAGQ. A compositionally biased stretch (pro residues) spans 350 to 359; that stretch reads GPVPGGPPPG. The segment covering 360–377 has biased composition (low complexity); sequence TGQQPPQQNTPPTSQYSP. Phosphothreonine is present on threonine 384. The segment covering 394–403 has biased composition (polar residues); sequence NHRTAYSTHQ. A compositionally biased stretch (low complexity) spans 411–423; the sequence is WPGGSSPSPGSGH. Pro residues predominate over residues 424-466; it reads PLPPASPHHVPPLQQQPPPPPHVSAGGPPPSSSPGHAPSPSPQ. Low complexity-rich tracts occupy residues 467-476 and 509-526; these read PSQASPSPHQ and MRPT…SMSP. Over residues 557–571 the composition is skewed to pro residues; sequence GPPPMPPHPGMPGGP. Residues 572–594 are compositionally biased toward low complexity; sequence PQQQQSQQQQASNSASSASNSPQ. Pro residues-rich tracts occupy residues 595 to 604, 651 to 669, 747 to 760, and 806 to 818; these read QTPPPAPPPN, PQQP…PQYP, TPPP…PPPQ, and PMGP…PPHG. A Phosphothreonine modification is found at threonine 747. The span at 819–838 shows a compositional bias: low complexity; the sequence is PTNMGPPTSTPPQSQMLQGG. The segment covering 839-851 has biased composition (gly residues); that stretch reads QPQGQGASGGPES. Polar residues-rich tracts occupy residues 859 to 868 and 879 to 904; these read QDNGISSSGP and SVVT…NASA. Residues 1000–1091 form the ARID domain; the sequence is NPDRRGWLDK…NLLTFECHFD (92 aa). 3 disordered regions span residues 1108–1766, 1914–1936, and 2045–2123; these read SKKK…PGGG, HYEN…EDAD, and KGRK…DCRP. Composition is skewed to low complexity over residues 1129-1139 and 1164-1173; these read GTTNSTGSSNS and GSPYPVASGP. Over residues 1181–1193 the composition is skewed to polar residues; that stretch reads GQMQRPPSQNNPQ. A compositionally biased stretch (gly residues) spans 1221–1256; sequence AGGGPGSGTGPGPGQGPGPGAASGGAGAVGAVGGGP. The span at 1266–1288 shows a compositional bias: low complexity; that stretch reads PHTAAQQAAGQHQQQHPQHQHPG. Over residues 1305–1318 the composition is skewed to pro residues; that stretch reads QPPPSVGGGPPPAP. Over residues 1407 to 1427 the composition is skewed to low complexity; sequence PEGEAPPTGANQYGPYGSRPY. The span at 1428 to 1438 shows a compositional bias: pro residues; sequence SQPPPGGPQPP. Residues 1456-1471 are compositionally biased toward low complexity; the sequence is PSSAYPTGRPSQQDYY. Positions 1508–1524 are enriched in polar residues; that stretch reads QSGTQQYRPQYPSSPAP. The segment covering 1534–1548 has biased composition (pro residues); it reads GAAPPPGAPHGPPIQ. The segment covering 1573–1593 has biased composition (low complexity); it reads QQQQPQQQQQQPPYQQVAGPP. Residues 1620 to 1629 show a composition bias toward pro residues; the sequence is PGSPLRPPSG. Low complexity-rich tracts occupy residues 1636 to 1652 and 1715 to 1729; these read MPGM…QGGV and GQAM…QPPS. The span at 1731-1744 shows a compositional bias: basic residues; the sequence is QHPHPHQHPQHQHP. A compositionally biased stretch (gly residues) spans 1755–1766; the sequence is GGYGPPGMPGGG. The 749-residue stretch at 1769–2517 folds into the EHD domain; it reads LVKKELIFPH…PIHSVEFRLL (749 aa). Phosphoserine occurs at positions 1930, 1932, and 2081. Composition is skewed to basic and acidic residues over residues 2091–2100 and 2109–2123; these read AEGKKSKLTS and EVKK…DCRP. Phosphoserine occurs at positions 2168 and 2169. Threonine 2176 carries the phosphothreonine modification. Serine 2181 is subject to Phosphoserine. Over residues 2520–2566 the composition is skewed to low complexity; that stretch reads RQQQQLRPGPAGKQAASAGGSATVKAETASTETSSTEAKPAPAATTA. Disordered stretches follow at residues 2520 to 2617 and 2684 to 2716; these read RQQQ…SHSS and VGPP…TAVA. Residues 2570-2579 show a composition bias toward polar residues; sequence DENSNSSQQL. Low complexity-rich tracts occupy residues 2584–2617 and 2684–2701; these read TFND…SHSS and VGPP…VAQP.

As to quaternary structure, component of the Brahma complex, which is composed of Brm, Osa, Mor, Snr1/Bap45, Bap111/Dalao, Bap55, Bap60 and Bap47. Interacts with Pnr and Chi via its EHD domain. As to expression, ubiquitously expressed in early embryo. In third instar larvae, it is ubiquitously expressed in wing and eye-antenna imaginal disks, with a stronger expression in a band just anterior to the morphogenetic furrow.

The protein resides in the nucleus. Functionally, trithorax group (trxG) protein required for embryonic segmentation, development of the notum and wing margin, and photoreceptor differentiation. Required for the activation of genes such as Antp, Ubx and Eve. Binds to DNA without specific affinity, suggesting that it is recruited to promoters by promoter-specific proteins. Essential component of the Brahma complex, a multiprotein complex which is the equivalent of the yeast SWI/SNF complex and acts by remodeling the chromatin by catalyzing an ATP-dependent alteration in the structure of nucleosomal DNA. This complex can both serve as a transcriptional coactivator or corepressor, depending on the context. Acts as an essential coactivator for Zeste, which recruits the whole complex to specific genes. In contrast, it acts as a corepressor for Wg target genes, possibly via an interaction with Pan and Gro. It also acts as a negative regulator for proneural achaete-scute, when it is directly recruited by Pan and Chi. Also represses E2f activation. The sequence is that of Trithorax group protein osa (osa) from Drosophila melanogaster (Fruit fly).